A 1029-amino-acid chain; its full sequence is Putative B3 domain-containing protein Os03g0621600 (1029 aa).

DNA-binding regions (TF-B3) lie at residues 147–240, 339–430, and 450–543; these read DTYF…FDPS, VAVM…RKMK, and EKYF…FDPS. The disordered stretch occupies residues 572-605; it reads TSYHDQPKGNKHWMQKDSSSKGNKIGNTRSSNTP. The span at 591-605 shows a compositional bias: polar residues; sequence SKGNKIGNTRSSNTP. The TF-B3 4 DNA-binding region spans 731–824; that stretch reads YKNFFKVMIG…KLKVLIFGPS (94 aa). A compositionally biased stretch (polar residues) spans 852 to 867; that stretch reads SSNSHDLPVKSPQNVS. Residues 852-882 are disordered; it reads SSNSHDLPVKSPQNVSKSEKQWDSSEQENDT. A DNA-binding region (TF-B3 5) is located at residues 934–1029; that stretch reads GCILRKSRVH…SMNVHIIPKK (96 aa).

Its subcellular location is the nucleus. The sequence is that of Putative B3 domain-containing protein Os03g0621600 from Oryza sativa subsp. japonica (Rice).